Consider the following 413-residue polypeptide: Calmodulin-binding protein CmbB (413 aa).

FNIP repeat units follow at residues 104 to 148 (FNHP…LSDC), 149 to 192 (YNQA…LGKG), 222 to 257 (SLPP…FGDG), 258 to 301 (FNQP…FHQF), 304 to 343 (FSQT…FSEK), and 344 to 386 (YNHP…LNGY).

In terms of assembly, interacts with calmodulin in the presence of Ca(2+).

In Dictyostelium discoideum (Social amoeba), this protein is Calmodulin-binding protein CmbB.